Reading from the N-terminus, the 258-residue chain is Snake venom serine protease HS114 (258 aa).

Positions 1-18 (MVLVRVVANLLILQLSYA) are cleaved as a signal peptide. A propeptide spanning residues 19–24 (QKVSEL) is cleaved from the precursor. One can recognise a Peptidase S1 domain in the interval 25–249 (VVGGDECNIN…YNTWIESVIA (225 aa)). Cystine bridges form between Cys-31-Cys-163, Cys-50-Cys-66, Cys-98-Cys-256, Cys-142-Cys-210, Cys-174-Cys-189, and Cys-200-Cys-225. N-linked (GlcNAc...) asparagine glycosylation occurs at Asn-44. Residues His-65 and Asp-110 each act as charge relay system in the active site. Ser-204 acts as the Charge relay system in catalysis.

This sequence belongs to the peptidase S1 family. Snake venom subfamily. Monomer. N-glycosylated. Contains approximately 10% carbohydrates. In terms of tissue distribution, expressed by the venom gland.

It is found in the secreted. Its activity is regulated as follows. Inhibited by benzamidine, PMSF, leupeptin, SDS and DTT, but not by EDTA, and commercial antivenom. Functionally, snake venom serine protease that shows non-specific action on fibrinogen. It preferentially degrades fibrinogen Aalpha (FGA), releasing fibrinopeptide A, and shows a lower activity on fibrinogen Bbeta (FGB), releasing fibrinopeptide B and other uncommon fibrinopeptides. Also shows low fibrinolytic activity compared to plasmin. Has high enzymatic activity on the substrates for activated protein C and factor XIa, and for thrombin. Shows a wide activity spectrum at different peptide sequences, with a preferential cleavage at Lys-|-Xaa over Arg-|-Xaa bonds. The sequence is that of Snake venom serine protease HS114 from Bothrops jararaca (Jararaca).